The sequence spans 147 residues: Large ribosomal subunit protein uL15 (147 aa).

Positions 1–46 (MSIRLENLSYTPGARKEKHRKGRGHAAGKGKQAGRGQSGQKKRSTV) are disordered. Residues 16 to 28 (KEKHRKGRGHAAG) are compositionally biased toward basic residues.

Belongs to the universal ribosomal protein uL15 family. As to quaternary structure, part of the 50S ribosomal subunit.

Its function is as follows. Binds to the 23S rRNA. This Mesomycoplasma hyopneumoniae (strain 232) (Mycoplasma hyopneumoniae) protein is Large ribosomal subunit protein uL15.